Reading from the N-terminus, the 433-residue chain is Enolase (433 aa).

Position 167 (Gln-167) interacts with (2R)-2-phosphoglycerate. Glu-209 serves as the catalytic Proton donor. The Mg(2+) site is built by Asp-246, Glu-291, and Asp-318. Positions 343, 372, 373, and 394 each coordinate (2R)-2-phosphoglycerate. Lys-343 serves as the catalytic Proton acceptor.

This sequence belongs to the enolase family. As to quaternary structure, component of the RNA degradosome, a multiprotein complex involved in RNA processing and mRNA degradation. It depends on Mg(2+) as a cofactor.

The protein resides in the cytoplasm. It localises to the secreted. It is found in the cell surface. The enzyme catalyses (2R)-2-phosphoglycerate = phosphoenolpyruvate + H2O. Its pathway is carbohydrate degradation; glycolysis; pyruvate from D-glyceraldehyde 3-phosphate: step 4/5. Catalyzes the reversible conversion of 2-phosphoglycerate (2-PG) into phosphoenolpyruvate (PEP). It is essential for the degradation of carbohydrates via glycolysis. In Vibrio vulnificus (strain CMCP6), this protein is Enolase.